We begin with the raw amino-acid sequence, 218 residues long: Ras-related protein Rab-4A (218 aa).

GTP contacts are provided by G23, T24, G25, K26, S27, C28, S42, H44, and T45. Mg(2+) is bound at residue S27. Residues 44 to 49 (HTIGVE) carry the Switch 1 motif. T45 and D68 together coordinate Mg(2+). The Switch 2 motif lies at 70-79 (AGQERFRSVT). G71 contributes to the GTP binding site. Q72 bears the 5-glutamyl serotonin mark. Positions 126, 127, 129, 157, and 158 each coordinate GTP. The residue at position 190 (S190) is a Phosphoserine. S204 is modified (phosphoserine; by CDK1). Residues C216 and C218 are each lipidated (S-geranylgeranyl cysteine). A Cysteine methyl ester modification is found at C218.

The protein belongs to the small GTPase superfamily. Rab family. In terms of assembly, interacts with SGSM1, SGSM2 and SGSM3. Interacts with RAB11FIP1, RABEP1, ZFYVE20 and RUFY1. Interacts (membrane-bound form) with NDRG1; the interaction involves NDRG1 in vesicular recycling of E-cadherin. Interacts (in GTP-bound form) with GRIPAP1 (via N-terminus). Interacts with RABEP1 and RBSN. Does not interact with HPS4. Interacts with RABEP2; this interaction may mediate VEGFR2 cell surface expression. Mg(2+) serves as cofactor. In terms of processing, serotonylation of Gln-72 by TGM2 during activation and aggregation of platelets leads to constitutive activation of GTPase activity. Phosphorylated by CDK1 kinase during mitosis.

It localises to the membrane. The protein localises to the cytoplasm. Its subcellular location is the early endosome membrane. The protein resides in the recycling endosome membrane. It carries out the reaction GTP + H2O = GDP + phosphate + H(+). Its activity is regulated as follows. Regulated by guanine nucleotide exchange factors (GEFs) which promote the exchange of bound GDP for free GTP. Regulated by GTPase activating proteins (GAPs) which increase the GTP hydrolysis activity. Inhibited by GDP dissociation inhibitors (GDIs). The small GTPases Rab are key regulators of intracellular membrane trafficking, from the formation of transport vesicles to their fusion with membranes. Rabs cycle between an inactive GDP-bound form and an active GTP-bound form that is able to recruit to membranes different sets of downstream effectors directly responsible for vesicle formation, movement, tethering and fusion. RAB4A is involved in protein transport. Also plays a role in vesicular traffic. Mediates VEGFR2 endosomal trafficking to enhance VEGFR2 signaling. Acts as a regulator of platelet alpha-granule release during activation and aggregation of platelets. This Rattus norvegicus (Rat) protein is Ras-related protein Rab-4A.